Reading from the N-terminus, the 353-residue chain is ATP-dependent kinase YFH7 (353 aa).

31–39 (GSPGSGKST) serves as a coordination point for ATP.

This sequence belongs to the YFH7 family.

ATP-dependent kinase that could be involved in endoplasmic reticulum membrane assembly. The polypeptide is ATP-dependent kinase YFH7 (YFH7) (Saccharomyces cerevisiae (strain Lalvin EC1118 / Prise de mousse) (Baker's yeast)).